Here is a 402-residue protein sequence, read N- to C-terminus: tRNA(Met) cytidine acetate ligase (402 aa).

Residues 7–20 (ITEY…HELH), Gly102, Asn171, and Arg196 contribute to the ATP site.

This sequence belongs to the TmcAL family.

The protein resides in the cytoplasm. It catalyses the reaction cytidine(34) in elongator tRNA(Met) + acetate + ATP = N(4)-acetylcytidine(34) in elongator tRNA(Met) + AMP + diphosphate. Its function is as follows. Catalyzes the formation of N(4)-acetylcytidine (ac(4)C) at the wobble position of elongator tRNA(Met), using acetate and ATP as substrates. First activates an acetate ion to form acetyladenylate (Ac-AMP) and then transfers the acetyl group to tRNA to form ac(4)C34. The sequence is that of tRNA(Met) cytidine acetate ligase from Clostridium perfringens (strain SM101 / Type A).